The sequence spans 666 residues: N-acetylgalactosaminyltransferase 6 (666 aa).

Residues 1-11 (MRRPNLKWIVK) lie on the Cytoplasmic side of the membrane. A helical; Signal-anchor for type II membrane protein transmembrane segment spans residues 12-31 (ASLLLLISLTLFVLITSWIS). Residues 32-666 (STPYTNKPVH…NYSQDLVLSL (635 aa)) lie on the Lumenal side of the membrane. Residues 90 to 126 (EPVEEEVDNPHPADDEPQQQPQEELQMAAPADASVKK) form a disordered region. Positions 107-120 (QQQPQEELQMAAPA) are enriched in low complexity. Residue Asn181 is glycosylated (N-linked (GlcNAc...) asparagine). 5 disulfide bridges follow: Cys192-Cys421, Cys412-Cys491, Cys531-Cys548, Cys577-Cys594, and Cys621-Cys636. Residues 201-311 (LPTVSVIIIF…YNWLPPLLEP (111 aa)) form a catalytic subdomain A region. Substrate contacts are provided by Asp242 and Arg272. The N-linked (GlcNAc...) asparagine glycan is linked to Asn285. Asp295 is a Mn(2+) binding site. Residue Ser296 coordinates substrate. His297 serves as a coordination point for Mn(2+). A catalytic subdomain B region spans residues 367-429 (PFKSPIMAGG…PCSRIGHIYR (63 aa)). A substrate-binding site is contributed by Trp398. His426 serves as a coordination point for Mn(2+). A substrate-binding site is contributed by Arg429. A Ricin B-type lectin domain is found at 518 to 648 (AMGALQNVGN…DNRFQQWNFG (131 aa)). Asn651 and Asn657 each carry an N-linked (GlcNAc...) asparagine glycan.

Belongs to the glycosyltransferase 2 family. GalNAc-T subfamily. The cofactor is Mn(2+). Expressed during oogenesis, in the somatically derived follicle cells that surround the developing oocyte, which are involved in the maturation of the oocyte and construction of the egg shell, as well as playing a role in subsequent embryonic pattern formation. Expressed in the salivary glands from embryonic stage 12 onwards, becoming stronger at stage 13. During embryonic stages 12-13, also expressed in the posterior midgut and hindgut. During embryonic stages 14-15, expression continues in the hindgut. Expression is detected in the epidermis and antennomaxillary complex during embryonic stages 16-17. In third instar larvae, ubiquitously expressed in wing, eye-antennal, leg and haltere imaginal disks.

It is found in the golgi apparatus membrane. It carries out the reaction L-seryl-[protein] + UDP-N-acetyl-alpha-D-galactosamine = a 3-O-[N-acetyl-alpha-D-galactosaminyl]-L-seryl-[protein] + UDP + H(+). The catalysed reaction is L-threonyl-[protein] + UDP-N-acetyl-alpha-D-galactosamine = a 3-O-[N-acetyl-alpha-D-galactosaminyl]-L-threonyl-[protein] + UDP + H(+). It functions in the pathway protein modification; protein glycosylation. In terms of biological role, glycopeptide transferase involved in O-linked oligosaccharide biosynthesis, which catalyzes the transfer of an N-acetyl-D-galactosamine residue to an already glycosylated peptide. In contrast to other proteins of the family, it does not act as a peptide transferase that transfers GalNAc onto serine or threonine residue on the protein receptor, but instead requires the prior addition of a GalNAc on a peptide before adding additional GalNAc moieties. Some peptide transferase activity is however not excluded, considering that its appropriate peptide substrate may remain unidentified. Prefers the diglycosylated Muc5AC-3/13 as substrate. Might have a role in protein O-glycosylation in the Golgi and thereby in establishing and/or maintaining a proper secretory apparatus structure. This is N-acetylgalactosaminyltransferase 6 from Drosophila melanogaster (Fruit fly).